Reading from the N-terminus, the 228-residue chain is FtsZ-localized protein A (228 aa).

In terms of domain architecture, GST N-terminal spans 3–85 (VERTLHHFPL…HIEETETEPP (83 aa)). In terms of domain architecture, GST C-terminal spans 90-223 (DPAERAEARR…WPGLAPAAHY (134 aa)).

It belongs to the GST superfamily. As to quaternary structure, homodimer. Interacts with FtsZ filaments. Probably interacts with the GTPase domain of FtsZ.

It is found in the cytoplasm. Its function is as follows. Essential cell division protein that must bind to FtsZ for division to occur. Critical coordinator of envelope constriction through its interaction with FtsZ. Promotes the formation of highly curved FtsZ filaments, reduces the GTPase activity of FtsZ and stabilizes FtsZ polymers. May regulate FtsZ function by modulating its superstructure. Does not bind to glutathione. This Caulobacter vibrioides (strain NA1000 / CB15N) (Caulobacter crescentus) protein is FtsZ-localized protein A.